Reading from the N-terminus, the 914-residue chain is Probable dipeptidyl-aminopeptidase B (914 aa).

A compositionally biased stretch (basic and acidic residues) spans Met-1–Ser-10. A disordered region spans residues Met-1–Arg-63. The Cytoplasmic segment spans residues Met-1–Arg-91. The segment covering Ser-20–Ser-35 has biased composition (low complexity). Positions Gln-45–Met-56 are enriched in polar residues. The helical; Signal-anchor for type II membrane protein transmembrane segment at Ile-92–Leu-112 threads the bilayer. At Thr-113–Val-914 the chain is on the vacuolar side. Residues Asn-348, Asn-565, and Asn-639 are each glycosylated (N-linked (GlcNAc...) asparagine). The active-site Charge relay system is the Ser-753. Asn-807 carries an N-linked (GlcNAc...) asparagine glycan. Catalysis depends on charge relay system residues Asp-830 and His-863.

The protein belongs to the peptidase S9B family.

Its subcellular location is the vacuole membrane. It catalyses the reaction Release of an N-terminal dipeptide, Xaa-Yaa-|-Zaa-, from a polypeptide, preferentially when Yaa is Pro, provided Zaa is neither Pro nor hydroxyproline.. Type IV dipeptidyl-peptidase which removes N-terminal dipeptides sequentially from polypeptides having unsubstituted N-termini provided that the penultimate residue is proline. The chain is Probable dipeptidyl-aminopeptidase B (dapB) from Aspergillus clavatus (strain ATCC 1007 / CBS 513.65 / DSM 816 / NCTC 3887 / NRRL 1 / QM 1276 / 107).